A 722-amino-acid polypeptide reads, in one-letter code: Polyribonucleotide nucleotidyltransferase (722 aa).

Mg(2+) contacts are provided by D487 and D493. Positions 554-613 (PRIETFKIPTDKIREVIGTGGKVIREIVEKTGAKVNIEDDGTVKVASSDGESIKAAIKWI) constitute a KH domain. One can recognise an S1 motif domain in the interval 623–691 (GEIYEGTVVK…DRGKTRLSMK (69 aa)). The disordered stretch occupies residues 697-722 (TGEDLEAKQKAEAKAEGEAPAQAAGE). Over residues 701–713 (LEAKQKAEAKAEG) the composition is skewed to basic and acidic residues.

This sequence belongs to the polyribonucleotide nucleotidyltransferase family. The cofactor is Mg(2+).

It localises to the cytoplasm. The catalysed reaction is RNA(n+1) + phosphate = RNA(n) + a ribonucleoside 5'-diphosphate. Its function is as follows. Involved in mRNA degradation. Catalyzes the phosphorolysis of single-stranded polyribonucleotides processively in the 3'- to 5'-direction. The chain is Polyribonucleotide nucleotidyltransferase from Rhodopseudomonas palustris (strain ATCC BAA-98 / CGA009).